A 150-amino-acid polypeptide reads, in one-letter code: Transcription antitermination protein NusB (150 aa).

It belongs to the NusB family.

In terms of biological role, involved in transcription antitermination. Required for transcription of ribosomal RNA (rRNA) genes. Binds specifically to the boxA antiterminator sequence of the ribosomal RNA (rrn) operons. In Streptococcus pyogenes serotype M4 (strain MGAS10750), this protein is Transcription antitermination protein NusB.